Here is a 297-residue protein sequence, read N- to C-terminus: HTH-type transcriptional regulator AceR (297 aa).

The 60-residue stretch at 1-60 folds into the HTH lysR-type domain; sequence MNINQEQLLMFQAVMETGSFSAAARKLGKVPSAVSMSIANLEIDLNLTLFERKGREPTPT. Residues 20–39 constitute a DNA-binding region (H-T-H motif); that stretch reads FSAAARKLGKVPSAVSMSIA.

This sequence belongs to the LysR transcriptional regulatory family. In terms of assembly, homodimer and homotetramer. Binding of chlorhexidine at the inducer-binding domain causes a quaternary structural change that favors interactions between dimers to form tetramers.

The protein localises to the cytoplasm. Its function is as follows. Regulates the expression of the AceI transporter. Binds DNA and chlorhexidine. Binds to regulatory sites within the intergenic region between the aceI and aceR genes, and affects the interaction between RNA polymerase (RNAP) and promoter DNA both in the presence and in the absence of chlorhexidine. In the absence of chlorhexidine, prevents transcription of the aceI gene by disrupting interactions between the promoter DNA and RNAP. In the presence of chlorhexidine, activates expression of aceI. When AceR interacts with chlorhexidine, it undergoes a conformational change and the tetrameric form either releases the DNA or shifts the position of the DNA-binding region to allow RNAP to bind onto the promoter DNA to proceed with aceI transcription. This chain is HTH-type transcriptional regulator AceR, found in Acinetobacter baumannii (strain ATCC 17978 / DSM 105126 / CIP 53.77 / LMG 1025 / NCDC KC755 / 5377).